Consider the following 576-residue polypeptide: Sulfite reductase [NADPH] hemoprotein beta-component (576 aa).

[4Fe-4S] cluster-binding residues include Cys-435, Cys-441, Cys-480, and Cys-484. Cys-484 is a binding site for siroheme.

The protein belongs to the nitrite and sulfite reductase 4Fe-4S domain family. Alpha(8)-beta(8). The alpha component is a flavoprotein, the beta component is a hemoprotein. The cofactor is siroheme. [4Fe-4S] cluster serves as cofactor.

The enzyme catalyses hydrogen sulfide + 3 NADP(+) + 3 H2O = sulfite + 3 NADPH + 4 H(+). It participates in sulfur metabolism; hydrogen sulfide biosynthesis; hydrogen sulfide from sulfite (NADPH route): step 1/1. Component of the sulfite reductase complex that catalyzes the 6-electron reduction of sulfite to sulfide. This is one of several activities required for the biosynthesis of L-cysteine from sulfate. The polypeptide is Sulfite reductase [NADPH] hemoprotein beta-component (Proteus mirabilis (strain HI4320)).